Reading from the N-terminus, the 20-residue chain is Large ribosomal subunit protein uL5 (20 aa).

The protein belongs to the universal ribosomal protein uL5 family. In terms of assembly, part of the 50S ribosomal subunit; part of the 5S rRNA/L5/L18/L25 subcomplex. Contacts the 5S rRNA and the P site tRNA. Forms a bridge to the 30S subunit in the 70S ribosome.

Functionally, this is one of the proteins that bind and probably mediate the attachment of the 5S RNA into the large ribosomal subunit, where it forms part of the central protuberance. In the 70S ribosome it contacts protein S13 of the 30S subunit (bridge B1b), connecting the two subunits; this bridge is implicated in subunit movement. Contacts the P site tRNA; the 5S rRNA and some of its associated proteins might help stabilize positioning of ribosome-bound tRNAs. This is Large ribosomal subunit protein uL5 (rplE) from Bacillus cereus.